A 205-amino-acid chain; its full sequence is MEINYELYLITDRRFLKGRQLKKIVEDAILGGVTIVQVREKDVSTREFYNVAKEVKEVTDYYKVPIIINDRLDIAQAIDASGVHLGQKDMHLNIAREILGKDKIIGISVGNVKEALEAQNNGADYLGIGTIFPTGSKKDVDAIIGIDGLSKIKDSISIPSVAIGGINKTNFKDVLKTGIEGISVISAILDEDDIKLAANNLLINK.

4-amino-2-methyl-5-(diphosphooxymethyl)pyrimidine-binding positions include 37 to 41 (QVREK) and N69. Positions 70 and 89 each coordinate Mg(2+). Residue S108 participates in 4-amino-2-methyl-5-(diphosphooxymethyl)pyrimidine binding. 134–136 (TGS) provides a ligand contact to 2-[(2R,5Z)-2-carboxy-4-methylthiazol-5(2H)-ylidene]ethyl phosphate. K137 contacts 4-amino-2-methyl-5-(diphosphooxymethyl)pyrimidine. 2-[(2R,5Z)-2-carboxy-4-methylthiazol-5(2H)-ylidene]ethyl phosphate contacts are provided by residues G165 and 185 to 186 (IS).

The protein belongs to the thiamine-phosphate synthase family. Mg(2+) serves as cofactor.

The catalysed reaction is 2-[(2R,5Z)-2-carboxy-4-methylthiazol-5(2H)-ylidene]ethyl phosphate + 4-amino-2-methyl-5-(diphosphooxymethyl)pyrimidine + 2 H(+) = thiamine phosphate + CO2 + diphosphate. It carries out the reaction 2-(2-carboxy-4-methylthiazol-5-yl)ethyl phosphate + 4-amino-2-methyl-5-(diphosphooxymethyl)pyrimidine + 2 H(+) = thiamine phosphate + CO2 + diphosphate. The enzyme catalyses 4-methyl-5-(2-phosphooxyethyl)-thiazole + 4-amino-2-methyl-5-(diphosphooxymethyl)pyrimidine + H(+) = thiamine phosphate + diphosphate. It participates in cofactor biosynthesis; thiamine diphosphate biosynthesis; thiamine phosphate from 4-amino-2-methyl-5-diphosphomethylpyrimidine and 4-methyl-5-(2-phosphoethyl)-thiazole: step 1/1. In terms of biological role, condenses 4-methyl-5-(beta-hydroxyethyl)thiazole monophosphate (THZ-P) and 2-methyl-4-amino-5-hydroxymethyl pyrimidine pyrophosphate (HMP-PP) to form thiamine monophosphate (TMP). The protein is Thiamine-phosphate synthase of Clostridium botulinum (strain Kyoto / Type A2).